A 283-amino-acid chain; its full sequence is Secretory carrier-associated membrane protein 2 (283 aa).

Positions 1-47 (MARHDPNPFADEEINPFANHTSVPPASNSYLKPLPPEPYDRGATVDI) are disordered. The Cytoplasmic portion of the chain corresponds to 1–123 (MARHDPNPFA…LQKIQYVAFT (123 aa)). A compositionally biased stretch (polar residues) spans 18–30 (ANHTSVPPASNSY). Residues 50 to 87 (DSGNDLRAKEMELQAKENELKRKEQELKRREDAIARTG) adopt a coiled-coil conformation. A run of 4 helical transmembrane segments spans residues 124 to 144 (TLLG…VAWI), 151 to 171 (IWLL…VLWY), 186 to 206 (FGAF…AAVA), and 234 to 254 (IMYF…IWVI). Residues 255-283 (QQVYAYFRGSGKAAEMKREATKSTLMRAL) are Cytoplasmic-facing.

The protein belongs to the SCAMP family.

Its subcellular location is the cell membrane. The protein resides in the cytoplasmic vesicle. It is found in the secretory vesicle membrane. Its function is as follows. Probably involved in membrane trafficking. This is Secretory carrier-associated membrane protein 2 (SCAMP2) from Arabidopsis thaliana (Mouse-ear cress).